Reading from the N-terminus, the 156-residue chain is Small ribosomal subunit protein uS7 (156 aa).

The protein belongs to the universal ribosomal protein uS7 family. Part of the 30S ribosomal subunit. Contacts proteins S9 and S11.

One of the primary rRNA binding proteins, it binds directly to 16S rRNA where it nucleates assembly of the head domain of the 30S subunit. Is located at the subunit interface close to the decoding center, probably blocks exit of the E-site tRNA. The chain is Small ribosomal subunit protein uS7 from Haemophilus influenzae (strain 86-028NP).